The chain runs to 409 residues: DNA primase DnaG (409 aa).

A Toprim domain is found at 175 to 261; it reads DAIIVVEGRA…EVEELTRKEI (87 aa). The Mg(2+) site is built by Glu181, Asp223, and Asp225. A compositionally biased stretch (basic and acidic residues) spans 280 to 289; it reads ERPKDKEREK. Residues 280–322 are disordered; the sequence is ERPKDKEREKGKKPKPKKRPERRGRPRKKKARPKRGPQERRLL. The segment covering 290–314 has biased composition (basic residues); sequence GKKPKPKKRPERRGRPRKKKARPKR.

It belongs to the archaeal DnaG primase family. In terms of assembly, forms a ternary complex with MCM helicase and DNA. Component of the archaeal exosome complex. Mg(2+) is required as a cofactor.

The enzyme catalyses ssDNA + n NTP = ssDNA/pppN(pN)n-1 hybrid + (n-1) diphosphate.. In terms of biological role, RNA polymerase that catalyzes the synthesis of short RNA molecules used as primers for DNA polymerase during DNA replication. Also part of the exosome, which is a complex involved in RNA degradation. Acts as a poly(A)-binding protein that enhances the interaction between heteromeric, adenine-rich transcripts and the exosome. The sequence is that of DNA primase DnaG from Methanopyrus kandleri (strain AV19 / DSM 6324 / JCM 9639 / NBRC 100938).